The sequence spans 238 residues: LRRN4 C-terminal-like protein (238 aa).

The signal sequence occupies residues 1-22 (MLGSPCLLWLLAVTFLVPRAQP). Topologically, residues 23 to 194 (LAPQDFEEEE…RLAVPPNPRT (172 aa)) are extracellular. Residues 82-176 (PPDPPRMGEV…AGGEGLEGAD (95 aa)) enclose the Fibronectin type-III domain. Residue N132 is glycosylated (N-linked (GlcNAc...) asparagine). The helical transmembrane segment at 195–215 (LVHAAVGVGTALALLSCAALV) threads the bilayer. At 216–238 (WHFCLRDRWGCPRRAAARAAGAL) the chain is on the cytoplasmic side.

It localises to the membrane. This chain is LRRN4 C-terminal-like protein (LRRN4CL), found in Homo sapiens (Human).